Here is a 165-residue protein sequence, read N- to C-terminus: V-type proton ATPase 16 kDa proteolipid subunit (165 aa).

Residues Met1–Thr10 are Lumenal-facing. Residues Ala11 to Gly33 traverse the membrane as a helical segment. Over Thr34–Ser55 the chain is Cytoplasmic. A helical transmembrane segment spans residues Ile56–Ile76. At Ser77–His95 the chain is on the lumenal side. The chain crosses the membrane as a helical span at residues Leu96 to Gly117. At Asp118–Lys129 the chain is on the cytoplasmic side. Residues Leu130–Leu155 traverse the membrane as a helical segment. Topologically, residues Ser156–Asp165 are lumenal.

Belongs to the V-ATPase proteolipid subunit family. V-ATPase is a heteromultimeric enzyme composed of a peripheral catalytic V1 complex (main components: subunits A, B, C, D, E, and F) attached to an integral membrane V0 proton pore complex (main component: the proteolipid protein; which is present as a hexamer that forms the proton-conducting pore).

It is found in the vacuole membrane. In terms of biological role, proton-conducting pore forming subunit of the membrane integral V0 complex of vacuolar ATPase. V-ATPase is responsible for acidifying a variety of intracellular compartments in eukaryotic cells. The polypeptide is V-type proton ATPase 16 kDa proteolipid subunit (VATP-P1) (Oryza sativa subsp. indica (Rice)).